The primary structure comprises 1217 residues: ATP-dependent RNA helicase DHX30 (1217 aa).

Residues Asp-15 and Ser-29 each carry the phosphoserine modification. The region spanning Pro-76–Phe-144 is the DRBM domain. A disordered region spans residues Trp-176–Gly-223. Residues Glu-211 to Gly-223 show a composition bias toward acidic residues. Ser-249 and Ser-403 each carry phosphoserine. The Helicase ATP-binding domain maps to Leu-467 to Pro-635. Residue Gly-480 to Thr-487 participates in ATP binding. The DEAH box signature appears at Asp-582–His-585. One can recognise a Helicase C-terminal domain in the interval Leu-677 to Met-850.

This sequence belongs to the DEAD box helicase family. DEAH subfamily. Identified in a complex with TFAM and SSBP1. Interacts (via N-terminus) with ZC3HAV1 (via N-terminal domain) in an RNA-independent manner. Found in a complex with GRSF1, DDX28, FASTKD2 and FASTKD5. In terms of processing, phosphorylated on Ser-15. As to expression, expressed in the heart, brain, spleen, lung, liver, skeletal muscle, kidney, and testis. Expression is strongest in the testis and brain, while the lowest levels of expression are found in the spleen and lung.

The protein localises to the cytoplasm. The protein resides in the mitochondrion. Its subcellular location is the mitochondrion matrix. It is found in the mitochondrion nucleoid. It carries out the reaction ATP + H2O = ADP + phosphate + H(+). Functionally, RNA-dependent helicase. Plays an important role in the assembly of the mitochondrial large ribosomal subunit. Required for optimal function of the zinc-finger antiviral protein ZC3HAV1. Associates with mitochondrial DNA. Involved in nervous system development and differentiation through its involvement in the up-regulation of a number of genes which are required for neurogenesis, including GSC, NCAM1, neurogenin, and NEUROD. In Mus musculus (Mouse), this protein is ATP-dependent RNA helicase DHX30 (Dhx30).